Reading from the N-terminus, the 173-residue chain is Large ribosomal subunit protein uL10 (173 aa).

Belongs to the universal ribosomal protein uL10 family. In terms of assembly, part of the ribosomal stalk of the 50S ribosomal subunit. The N-terminus interacts with L11 and the large rRNA to form the base of the stalk. The C-terminus forms an elongated spine to which L12 dimers bind in a sequential fashion forming a multimeric L10(L12)X complex.

Forms part of the ribosomal stalk, playing a central role in the interaction of the ribosome with GTP-bound translation factors. In Thermus thermophilus (strain ATCC BAA-163 / DSM 7039 / HB27), this protein is Large ribosomal subunit protein uL10.